The primary structure comprises 57 residues: Large ribosomal subunit protein bL32 (57 aa).

Residues 1-23 are disordered; the sequence is MAVPKKKTSKSKRDKRRATWRHK.

Belongs to the bacterial ribosomal protein bL32 family.

The protein is Large ribosomal subunit protein bL32 of Nostoc sp. (strain PCC 7120 / SAG 25.82 / UTEX 2576).